Here is a 242-residue protein sequence, read N- to C-terminus: uncharacterized protein (242 aa).

It localises to the cytoplasm. Its subcellular location is the nucleus. This is an uncharacterized protein from Schizosaccharomyces pombe (strain 972 / ATCC 24843) (Fission yeast).